The primary structure comprises 67 residues: Small ribosomal subunit protein eS17 (67 aa).

It belongs to the eukaryotic ribosomal protein eS17 family.

The chain is Small ribosomal subunit protein eS17 from Haloquadratum walsbyi (strain DSM 16790 / HBSQ001).